The sequence spans 278 residues: Large ribosomal subunit protein uL2c (278 aa).

Residues 222-241 (GVVMNPNDHPHGGGEGRSPI) are disordered.

It belongs to the universal ribosomal protein uL2 family. Part of the 50S ribosomal subunit.

The protein resides in the plastid. The protein localises to the chloroplast. This chain is Large ribosomal subunit protein uL2c (rpl2), found in Tupiella akineta (Green alga).